Consider the following 350-residue polypeptide: Biotin synthase (350 aa).

The region spanning 38-265 (NHVQVSTLLS…MSAVRLSAGR (228 aa)) is the Radical SAM core domain. [4Fe-4S] cluster contacts are provided by cysteine 53, cysteine 57, and cysteine 60. [2Fe-2S] cluster-binding residues include cysteine 97, cysteine 128, cysteine 188, and arginine 260.

The protein belongs to the radical SAM superfamily. Biotin synthase family. In terms of assembly, homodimer. [4Fe-4S] cluster is required as a cofactor. [2Fe-2S] cluster serves as cofactor.

The catalysed reaction is (4R,5S)-dethiobiotin + (sulfur carrier)-SH + 2 reduced [2Fe-2S]-[ferredoxin] + 2 S-adenosyl-L-methionine = (sulfur carrier)-H + biotin + 2 5'-deoxyadenosine + 2 L-methionine + 2 oxidized [2Fe-2S]-[ferredoxin]. The protein operates within cofactor biosynthesis; biotin biosynthesis; biotin from 7,8-diaminononanoate: step 2/2. In terms of biological role, catalyzes the conversion of dethiobiotin (DTB) to biotin by the insertion of a sulfur atom into dethiobiotin via a radical-based mechanism. In Vibrio atlanticus (strain LGP32) (Vibrio splendidus (strain Mel32)), this protein is Biotin synthase.